A 341-amino-acid polypeptide reads, in one-letter code: Probable sulfurtransferase (341 aa).

Residues Cys-40, Cys-42, Cys-58, and Cys-61 each contribute to the Zn(2+) site. An ATP-binding site is contributed by Gly-88. [4Fe-4S] cluster-binding residues include Cys-176 and Cys-179. The ATP site is built by Arg-183 and Gly-202. Cys-267 is a [4Fe-4S] cluster binding site. Zn(2+) contacts are provided by Cys-316, Cys-319, Cys-328, and Cys-331.

This sequence belongs to the TtcA family. [4Fe-4S] cluster is required as a cofactor. Requires Mg(2+) as cofactor.

This chain is Probable sulfurtransferase, found in Methanocaldococcus jannaschii (strain ATCC 43067 / DSM 2661 / JAL-1 / JCM 10045 / NBRC 100440) (Methanococcus jannaschii).